The sequence spans 541 residues: MKSFKIALAQFSPHIGNIDSNAQRMVEQANEAKKQNADLIIFPELSVIGYPAEDLLLRPNLNKRMQKAFQQLKEVKDIVMVFGFVHQTEEGHRYNSAAVMKDGVVLGVYNKHNLPNYSVFDEKRYFSPGHQHLVFEYLGHKFGVLICEDIWSINTVKQLSKLNVETVLVLNASPYEVGKPQHRVQTLTELSKQLNVHLVYLNQVGGQDDLIFDGSSFIINHDGEVAFQAPSFKEELYYSEFDIEQKRYKKIDPAPALDTIAEIYQSLVMATRDYVQRSGFSGVILGLSGGIDSALTLAIAADAIGADKVQAVMMPYTYTSQISVEDATEQARRMGVTFGIAEIHPIVNSFMQTLYPFFGNAPADATEENLQARARGTLLMGLSNKFGNLVLSTGNKSELAVGYCTLYGDMVGGFAVLKDVYKTIVFELAKYRNTLSETPVIPERVITRPPSAELRPDQKDQDSLPAYDILDAILYAYIEEDQSQSDIIAKGFDKEVVEKVIRLVDRNEYKRRQGAIGPRISSRAFSRERRYPIVNGWRPDD.

Positions 4-243 constitute a CN hydrolase domain; the sequence is FKIALAQFSP…EELYYSEFDI (240 aa). Glutamate 44 acts as the Proton acceptor; for glutaminase activity in catalysis. Lysine 111 acts as the For glutaminase activity in catalysis. L-glutamine is bound at residue tyrosine 117. Cysteine 147 (nucleophile; for glutaminase activity) is an active-site residue. 2 residues coordinate L-glutamine: serine 173 and lysine 179. 286 to 293 is an ATP binding site; it reads GLSGGIDS. Deamido-NAD(+) is bound at residue asparagine 369. Residue threonine 393 coordinates ATP. Positions 398 and 510 each coordinate deamido-NAD(+).

The protein in the C-terminal section; belongs to the NAD synthetase family.

The enzyme catalyses deamido-NAD(+) + L-glutamine + ATP + H2O = L-glutamate + AMP + diphosphate + NAD(+) + H(+). It participates in cofactor biosynthesis; NAD(+) biosynthesis; NAD(+) from deamido-NAD(+) (L-Gln route): step 1/1. Catalyzes the ATP-dependent amidation of deamido-NAD to form NAD. Uses L-glutamine as a nitrogen source. In vitro, can also use ammonia as donor with comparable specific activity, but cannot use nicotinate mononucleotide (NaMN) as substrate. This Acinetobacter baylyi (strain ATCC 33305 / BD413 / ADP1) protein is Glutamine-dependent NAD(+) synthetase.